A 387-amino-acid polypeptide reads, in one-letter code: Ferrochelatase (387 aa).

Residues H196 and E277 each coordinate Fe cation.

The protein belongs to the ferrochelatase family.

The protein resides in the cytoplasm. The enzyme catalyses heme b + 2 H(+) = protoporphyrin IX + Fe(2+). Its pathway is porphyrin-containing compound metabolism; protoheme biosynthesis; protoheme from protoporphyrin-IX: step 1/1. Its function is as follows. Catalyzes the ferrous insertion into protoporphyrin IX. This chain is Ferrochelatase, found in Rippkaea orientalis (strain PCC 8801 / RF-1) (Cyanothece sp. (strain PCC 8801)).